The chain runs to 642 residues: Threonine--tRNA ligase (642 aa).

Positions 1–61 (MPVIRFYDGS…REDAFIEFVD (61 aa)) constitute a TGS domain. The catalytic stretch occupies residues 243 to 534 (DHRKIGKFLQ…LIEECSGNLP (292 aa)). Cys334, His385, and His511 together coordinate Zn(2+).

It belongs to the class-II aminoacyl-tRNA synthetase family. As to quaternary structure, homodimer. Requires Zn(2+) as cofactor.

The protein resides in the cytoplasm. The enzyme catalyses tRNA(Thr) + L-threonine + ATP = L-threonyl-tRNA(Thr) + AMP + diphosphate + H(+). Catalyzes the attachment of threonine to tRNA(Thr) in a two-step reaction: L-threonine is first activated by ATP to form Thr-AMP and then transferred to the acceptor end of tRNA(Thr). Also edits incorrectly charged L-seryl-tRNA(Thr). The chain is Threonine--tRNA ligase from Buchnera aphidicola subsp. Acyrthosiphon pisum (strain 5A).